The chain runs to 323 residues: 1D-myo-inositol 2-acetamido-2-deoxy-alpha-D-glucopyranoside deacetylase 1 (323 aa).

Residues His-30, Asp-33, and His-165 each contribute to the Zn(2+) site.

The protein belongs to the MshB deacetylase family. The cofactor is Zn(2+).

It carries out the reaction 1D-myo-inositol 2-acetamido-2-deoxy-alpha-D-glucopyranoside + H2O = 1D-myo-inositol 2-amino-2-deoxy-alpha-D-glucopyranoside + acetate. Catalyzes the deacetylation of 1D-myo-inositol 2-acetamido-2-deoxy-alpha-D-glucopyranoside (GlcNAc-Ins) in the mycothiol biosynthesis pathway. This is 1D-myo-inositol 2-acetamido-2-deoxy-alpha-D-glucopyranoside deacetylase 1 from Catenulispora acidiphila (strain DSM 44928 / JCM 14897 / NBRC 102108 / NRRL B-24433 / ID139908).